The sequence spans 741 residues: Phosphoribosylformylglycinamidine synthase subunit PurL (741 aa).

His54 is a catalytic residue. Residues Tyr57 and Lys98 each contribute to the ATP site. Residue Glu100 participates in Mg(2+) binding. Residues 101 to 104 (SHNH) and Arg123 contribute to the substrate site. His102 acts as the Proton acceptor in catalysis. Asp124 is a binding site for Mg(2+). Gln251 serves as a coordination point for substrate. Asp279 contributes to the Mg(2+) binding site. Residue 323–325 (ESQ) coordinates substrate. ATP is bound by residues Asp510 and Gly547. Asn548 contacts Mg(2+). A substrate-binding site is contributed by Ser550.

Belongs to the FGAMS family. In terms of assembly, monomer. Part of the FGAM synthase complex composed of 1 PurL, 1 PurQ and 2 PurS subunits.

Its subcellular location is the cytoplasm. The catalysed reaction is N(2)-formyl-N(1)-(5-phospho-beta-D-ribosyl)glycinamide + L-glutamine + ATP + H2O = 2-formamido-N(1)-(5-O-phospho-beta-D-ribosyl)acetamidine + L-glutamate + ADP + phosphate + H(+). It participates in purine metabolism; IMP biosynthesis via de novo pathway; 5-amino-1-(5-phospho-D-ribosyl)imidazole from N(2)-formyl-N(1)-(5-phospho-D-ribosyl)glycinamide: step 1/2. Its function is as follows. Part of the phosphoribosylformylglycinamidine synthase complex involved in the purines biosynthetic pathway. Catalyzes the ATP-dependent conversion of formylglycinamide ribonucleotide (FGAR) and glutamine to yield formylglycinamidine ribonucleotide (FGAM) and glutamate. The FGAM synthase complex is composed of three subunits. PurQ produces an ammonia molecule by converting glutamine to glutamate. PurL transfers the ammonia molecule to FGAR to form FGAM in an ATP-dependent manner. PurS interacts with PurQ and PurL and is thought to assist in the transfer of the ammonia molecule from PurQ to PurL. The sequence is that of Phosphoribosylformylglycinamidine synthase subunit PurL from Picrophilus torridus (strain ATCC 700027 / DSM 9790 / JCM 10055 / NBRC 100828 / KAW 2/3).